The chain runs to 610 residues: UvrABC system protein C (610 aa).

In terms of domain architecture, GIY-YIG spans 16 to 94 (NQPGVYRMYD…IKRYQPRYNV (79 aa)). In terms of domain architecture, UVR spans 204–239 (SQVIDALVARMEEASRALRFEEAARLRDQIQAVRRV).

It belongs to the UvrC family. In terms of assembly, interacts with UvrB in an incision complex.

Its subcellular location is the cytoplasm. The UvrABC repair system catalyzes the recognition and processing of DNA lesions. UvrC both incises the 5' and 3' sides of the lesion. The N-terminal half is responsible for the 3' incision and the C-terminal half is responsible for the 5' incision. The chain is UvrABC system protein C from Edwardsiella ictaluri (strain 93-146).